The sequence spans 148 residues: Troponin C (148 aa).

EF-hand domains follow at residues 8-43 (KQFN…LALH), 44-79 (VSDD…KVQE), 81-116 (EDER…LGDD), and 117-148 (LNDD…LMLG). Ca(2+) is bound by residues D130, D132, S134, T136, and E141.

This sequence belongs to the troponin C family.

In terms of biological role, troponin is the central regulatory protein of striated muscle contraction. Tn consists of three components: Tn-I which is the inhibitor of actomyosin ATPase, Tn-T which contains the binding site for tropomyosin and Tn-C. The binding of calcium to Tn-C abolishes the inhibitory action of Tn on actin filaments. The polypeptide is Troponin C (Todarodes pacificus (Japanese flying squid)).